We begin with the raw amino-acid sequence, 158 residues long: Transcription elongation factor GreA (158 aa).

It belongs to the GreA/GreB family.

In terms of biological role, necessary for efficient RNA polymerase transcription elongation past template-encoded arresting sites. The arresting sites in DNA have the property of trapping a certain fraction of elongating RNA polymerases that pass through, resulting in locked ternary complexes. Cleavage of the nascent transcript by cleavage factors such as GreA or GreB allows the resumption of elongation from the new 3'terminus. GreA releases sequences of 2 to 3 nucleotides. This is Transcription elongation factor GreA from Methylobacterium nodulans (strain LMG 21967 / CNCM I-2342 / ORS 2060).